We begin with the raw amino-acid sequence, 377 residues long: Chaperone protein DnaJ (377 aa).

In terms of domain architecture, J spans 4 to 69 (DYYEALGVTR…QKRAAYDRFG (66 aa)). A CR-type zinc finger spans residues 135–213 (GKTAQIRVPT…CHGQGRVTQE (79 aa)). Residues C148, C151, C165, C168, C187, C190, C201, and C204 each contribute to the Zn(2+) site. CXXCXGXG motif repeat units lie at residues 148 to 155 (CDECSGSG), 165 to 172 (CTMCSGSG), 187 to 194 (CPGCNGRG), and 201 to 208 (CEKCHGQG).

It belongs to the DnaJ family. As to quaternary structure, homodimer. The cofactor is Zn(2+).

Its subcellular location is the cytoplasm. Functionally, participates actively in the response to hyperosmotic and heat shock by preventing the aggregation of stress-denatured proteins and by disaggregating proteins, also in an autonomous, DnaK-independent fashion. Unfolded proteins bind initially to DnaJ; upon interaction with the DnaJ-bound protein, DnaK hydrolyzes its bound ATP, resulting in the formation of a stable complex. GrpE releases ADP from DnaK; ATP binding to DnaK triggers the release of the substrate protein, thus completing the reaction cycle. Several rounds of ATP-dependent interactions between DnaJ, DnaK and GrpE are required for fully efficient folding. Also involved, together with DnaK and GrpE, in the DNA replication of plasmids through activation of initiation proteins. The polypeptide is Chaperone protein DnaJ (Brucella ovis (strain ATCC 25840 / 63/290 / NCTC 10512)).